The following is a 96-amino-acid chain: Large ribosomal subunit protein uL23 (96 aa).

It belongs to the universal ribosomal protein uL23 family. Part of the 50S ribosomal subunit. Contacts protein L29, and trigger factor when it is bound to the ribosome.

Functionally, one of the early assembly proteins it binds 23S rRNA. One of the proteins that surrounds the polypeptide exit tunnel on the outside of the ribosome. Forms the main docking site for trigger factor binding to the ribosome. The protein is Large ribosomal subunit protein uL23 of Vesicomyosocius okutanii subsp. Calyptogena okutanii (strain HA).